The following is a 230-amino-acid chain: E3 ubiquitin-protein ligase RNF114 (230 aa).

The segment at 31–70 (CPVCLEVYEKPVQVPCGHVFCSACLQECLKPKKPVCGVCR) adopts an RING-type zinc-finger fold. Cys93 and Cys96 together coordinate Zn(2+). A C2HC RNF-type zinc finger spans residues 93 to 112 (CHGCRKNFFLSKIRAHVATC). Lys104 is modified (N6-acetyllysine). Zn(2+) is bound by residues His108 and Cys112. The residue at position 114 (Lys114) is an N6-acetyllysine.

As to quaternary structure, interacts with XAF1, the interaction increases XAF1 stability and proapoptotic effects, and may regulate IFN signaling. In terms of processing, autoubiquitinated. Polyubiquitinated in the presence of E2 enzymes UBE2D1, UBE2D2 and UBE2D3, but only monoubiquitinated in the presence of UBE2E1.

Its subcellular location is the cytoplasm. It localises to the nucleus. It catalyses the reaction S-ubiquitinyl-[E2 ubiquitin-conjugating enzyme]-L-cysteine + [acceptor protein]-L-lysine = [E2 ubiquitin-conjugating enzyme]-L-cysteine + N(6)-ubiquitinyl-[acceptor protein]-L-lysine.. It functions in the pathway protein modification; protein ubiquitination. Its function is as follows. E3 ubiquitin-protein ligase that promotes the ubiquitination of various substrates. In turn, participates in the regulation of many biological processes including cell cycle, apoptosis, osteoclastogenesis as well as innate or adaptive immunity. Acts as negative regulator of NF-kappa-B-dependent transcription by promoting the ubiquitination and stabilization of the NF-kappa-B inhibitor TNFAIP3. May promote the ubiquitination of TRAF6 as well. Also acts as a negative regulator of T-cell activation. Inhibits cellular dsRNA responses and interferon production by targeting MAVS component for proteasomal degradation. Ubiquitinates the CDK inhibitor CDKN1A leading to its degradationand probably also CDKN1B and CDKN1C. This activity stimulates cell cycle G1-to-S phase transition and suppresses cellular senescence. May play a role in spermatogenesis. The polypeptide is E3 ubiquitin-protein ligase RNF114 (RNF114) (Bos taurus (Bovine)).